Reading from the N-terminus, the 154-residue chain is Protein X (154 aa).

Residues 68–117 (PCALRFTFARRMETTVNAHQVLPKVLHKRTLGLSAMSTTDLEAYFKDCVF) are mitochondrial targeting sequence.

This sequence belongs to the orthohepadnavirus protein X family. May form homodimer. May interact with host CEBPA, CFLAR, CREB1, DDB1, E4F1, HBXIP, HSPD1/HSP60, NFKBIA, POLR2E and SMAD4. Interacts with host SMC5-SMC6 complex and induces its degradation. Interacts with host TRPC4AP; leading to prevent ubiquitination of TRPC4AP. Interacts with host PLSCR1; this interaction promotes ubiquitination and degradation of HBx and impairs HBx-mediated cell proliferation. Post-translationally, a fraction may be phosphorylated in insect cells and HepG2 cells, a human hepatoblastoma cell line. Phosphorylated in vitro by host protein kinase C or mitogen-activated protein kinase. N-acetylated in insect cells.

Its subcellular location is the host cytoplasm. It is found in the host nucleus. It localises to the host mitochondrion. Functionally, multifunctional protein that plays a role in silencing host antiviral defenses and promoting viral transcription. Does not seem to be essential for HBV infection. May be directly involved in development of cirrhosis and liver cancer (hepatocellular carcinoma). Most of cytosolic activities involve modulation of cytosolic calcium. The effect on apoptosis is controversial depending on the cell types in which the studies have been conducted. May induce apoptosis by localizing in mitochondria and causing loss of mitochondrial membrane potential. May also modulate apoptosis by binding host CFLAR, a key regulator of the death-inducing signaling complex (DISC). Promotes viral transcription by using the host E3 ubiquitin ligase DDB1 to target the SMC5-SMC6 complex to proteasomal degradation. This host complex would otherwise bind to viral episomal DNA, and prevents its transcription. Moderately stimulates transcription of many different viral and cellular transcription elements. Promoters and enhancers stimulated by HBx contain DNA binding sites for NF-kappa-B, AP-1, AP-2, c-EBP, ATF/CREB, or the calcium-activated factor NF-AT. This is Protein X from Hepatitis B virus genotype C subtype ayw (isolate China/Tibet127/2002) (HBV-C).